Here is a 661-residue protein sequence, read N- to C-terminus: UvrABC system protein B (661 aa).

Residues 25–182 (AGLSSKKRSQ…NDLINLQYER (158 aa)) form the Helicase ATP-binding domain. 38–45 (GITGSGKT) is a binding site for ATP. Positions 91–114 (YYDYYQPEAYIARTDTFIEKDSSI) match the Beta-hairpin motif. Residues 430–592 (QVEDLISEIQ…IIPKTINRAI (163 aa)) form the Helicase C-terminal domain. The UVR domain occupies 621-656 (KTHIDKLKKEMLKAASNLEFEQAVKLRDQLKTLEAA).

This sequence belongs to the UvrB family. As to quaternary structure, forms a heterotetramer with UvrA during the search for lesions. Interacts with UvrC in an incision complex.

Its subcellular location is the cytoplasm. In terms of biological role, the UvrABC repair system catalyzes the recognition and processing of DNA lesions. A damage recognition complex composed of 2 UvrA and 2 UvrB subunits scans DNA for abnormalities. Upon binding of the UvrA(2)B(2) complex to a putative damaged site, the DNA wraps around one UvrB monomer. DNA wrap is dependent on ATP binding by UvrB and probably causes local melting of the DNA helix, facilitating insertion of UvrB beta-hairpin between the DNA strands. Then UvrB probes one DNA strand for the presence of a lesion. If a lesion is found the UvrA subunits dissociate and the UvrB-DNA preincision complex is formed. This complex is subsequently bound by UvrC and the second UvrB is released. If no lesion is found, the DNA wraps around the other UvrB subunit that will check the other stand for damage. The polypeptide is UvrABC system protein B (Rickettsia peacockii (strain Rustic)).